The chain runs to 1481 residues: DNA-directed RNA polymerase subunit beta'' (1481 aa).

The Zn(2+) site is built by Cys217, Cys291, Cys298, and Cys301.

The protein belongs to the RNA polymerase beta' chain family. RpoC2 subfamily. In terms of assembly, in plastids the minimal PEP RNA polymerase catalytic core is composed of four subunits: alpha, beta, beta', and beta''. When a (nuclear-encoded) sigma factor is associated with the core the holoenzyme is formed, which can initiate transcription. Zn(2+) serves as cofactor.

The protein localises to the plastid. It localises to the chloroplast. It catalyses the reaction RNA(n) + a ribonucleoside 5'-triphosphate = RNA(n+1) + diphosphate. In terms of biological role, DNA-dependent RNA polymerase catalyzes the transcription of DNA into RNA using the four ribonucleoside triphosphates as substrates. The sequence is that of DNA-directed RNA polymerase subunit beta'' from Trieres chinensis (Marine centric diatom).